The sequence spans 364 residues: tRNA N6-adenosine threonylcarbamoyltransferase (364 aa).

Residues H118 and H122 each contribute to the Fe cation site. Substrate-binding positions include 140 to 144 (LVSGG), D173, G186, and N288. D316 is a binding site for Fe cation.

This sequence belongs to the KAE1 / TsaD family. Fe(2+) is required as a cofactor.

Its subcellular location is the cytoplasm. It carries out the reaction L-threonylcarbamoyladenylate + adenosine(37) in tRNA = N(6)-L-threonylcarbamoyladenosine(37) in tRNA + AMP + H(+). Functionally, required for the formation of a threonylcarbamoyl group on adenosine at position 37 (t(6)A37) in tRNAs that read codons beginning with adenine. Is involved in the transfer of the threonylcarbamoyl moiety of threonylcarbamoyl-AMP (TC-AMP) to the N6 group of A37, together with TsaE and TsaB. TsaD likely plays a direct catalytic role in this reaction. The polypeptide is tRNA N6-adenosine threonylcarbamoyltransferase (Cereibacter sphaeroides (strain KD131 / KCTC 12085) (Rhodobacter sphaeroides)).